The primary structure comprises 404 residues: Tryptophan synthase beta chain (404 aa).

Lys98 is subject to N6-(pyridoxal phosphate)lysine.

It belongs to the TrpB family. In terms of assembly, tetramer of two alpha and two beta chains. Requires pyridoxal 5'-phosphate as cofactor.

It catalyses the reaction (1S,2R)-1-C-(indol-3-yl)glycerol 3-phosphate + L-serine = D-glyceraldehyde 3-phosphate + L-tryptophan + H2O. The protein operates within amino-acid biosynthesis; L-tryptophan biosynthesis; L-tryptophan from chorismate: step 5/5. In terms of biological role, the beta subunit is responsible for the synthesis of L-tryptophan from indole and L-serine. The protein is Tryptophan synthase beta chain of Rhodopseudomonas palustris (strain BisB5).